Consider the following 452-residue polypeptide: Bifunctional protein GlmU (452 aa).

Positions 1 to 226 (MSLAVVILAA…GWEVDGVNDR (226 aa)) are pyrophosphorylase. UDP-N-acetyl-alpha-D-glucosamine contacts are provided by residues 8–11 (LAAG), Lys-22, Gln-73, 78–79 (GT), 99–101 (YGD), Gly-136, Glu-151, Asn-166, and Asn-224. Residue Asp-101 participates in Mg(2+) binding. A Mg(2+)-binding site is contributed by Asn-224. The linker stretch occupies residues 227-247 (VQLARLERIYQQAQAETLMRD). The segment at 248 to 452 (GVTLLDPSRL…VANWQRPKKG (205 aa)) is N-acetyltransferase. UDP-N-acetyl-alpha-D-glucosamine contacts are provided by Arg-330 and Lys-348. Catalysis depends on His-360, which acts as the Proton acceptor. The UDP-N-acetyl-alpha-D-glucosamine site is built by Tyr-363 and Asn-374. Residues Ala-377, 383 to 384 (NY), Ser-402, Ala-420, and Arg-437 contribute to the acetyl-CoA site.

It in the N-terminal section; belongs to the N-acetylglucosamine-1-phosphate uridyltransferase family. This sequence in the C-terminal section; belongs to the transferase hexapeptide repeat family. In terms of assembly, homotrimer. Mg(2+) is required as a cofactor.

It is found in the cytoplasm. The catalysed reaction is alpha-D-glucosamine 1-phosphate + acetyl-CoA = N-acetyl-alpha-D-glucosamine 1-phosphate + CoA + H(+). It catalyses the reaction N-acetyl-alpha-D-glucosamine 1-phosphate + UTP + H(+) = UDP-N-acetyl-alpha-D-glucosamine + diphosphate. It functions in the pathway nucleotide-sugar biosynthesis; UDP-N-acetyl-alpha-D-glucosamine biosynthesis; N-acetyl-alpha-D-glucosamine 1-phosphate from alpha-D-glucosamine 6-phosphate (route II): step 2/2. Its pathway is nucleotide-sugar biosynthesis; UDP-N-acetyl-alpha-D-glucosamine biosynthesis; UDP-N-acetyl-alpha-D-glucosamine from N-acetyl-alpha-D-glucosamine 1-phosphate: step 1/1. It participates in bacterial outer membrane biogenesis; LPS lipid A biosynthesis. Its function is as follows. Catalyzes the last two sequential reactions in the de novo biosynthetic pathway for UDP-N-acetylglucosamine (UDP-GlcNAc). The C-terminal domain catalyzes the transfer of acetyl group from acetyl coenzyme A to glucosamine-1-phosphate (GlcN-1-P) to produce N-acetylglucosamine-1-phosphate (GlcNAc-1-P), which is converted into UDP-GlcNAc by the transfer of uridine 5-monophosphate (from uridine 5-triphosphate), a reaction catalyzed by the N-terminal domain. The chain is Bifunctional protein GlmU from Alcanivorax borkumensis (strain ATCC 700651 / DSM 11573 / NCIMB 13689 / SK2).